A 407-amino-acid polypeptide reads, in one-letter code: Leucine-rich repeat-containing protein 42 (407 aa).

LRR repeat units lie at residues 138 to 159, 163 to 184, 191 to 211, 223 to 243, and 247 to 268; these read VLKS…EEIR, SLEC…FKYI, SLVK…QRLT, NLQL…RYLT, and TLQK…KGFF. Residues 360-389 are disordered; the sequence is VQSSPSGETHSTHKSRKRRLSTEEEQSAAP.

This sequence belongs to the LRRC42 family.

In Danio rerio (Zebrafish), this protein is Leucine-rich repeat-containing protein 42 (lrrc42).